The primary structure comprises 395 residues: S-adenosylmethionine synthase (395 aa).

H14 is a binding site for ATP. D16 provides a ligand contact to Mg(2+). K(+) is bound at residue E42. Residues E55 and Q98 each coordinate L-methionine. The flexible loop stretch occupies residues 98 to 108 (QSPDIAMGVDK). ATP contacts are provided by residues 175–177 (DGK), 242–243 (RF), D251, 257–258 (RK), A274, and K278. Residue D251 coordinates L-methionine. K282 provides a ligand contact to L-methionine.

The protein belongs to the AdoMet synthase family. Homotetramer; dimer of dimers. Mg(2+) serves as cofactor. It depends on K(+) as a cofactor.

Its subcellular location is the cytoplasm. It carries out the reaction L-methionine + ATP + H2O = S-adenosyl-L-methionine + phosphate + diphosphate. It participates in amino-acid biosynthesis; S-adenosyl-L-methionine biosynthesis; S-adenosyl-L-methionine from L-methionine: step 1/1. Catalyzes the formation of S-adenosylmethionine (AdoMet) from methionine and ATP. The overall synthetic reaction is composed of two sequential steps, AdoMet formation and the subsequent tripolyphosphate hydrolysis which occurs prior to release of AdoMet from the enzyme. This Thermosipho melanesiensis (strain DSM 12029 / CIP 104789 / BI429) protein is S-adenosylmethionine synthase.